The following is a 358-amino-acid chain: UDP-3-O-acylglucosamine N-acyltransferase (358 aa).

Residue histidine 252 is the Proton acceptor of the active site.

It belongs to the transferase hexapeptide repeat family. LpxD subfamily. In terms of assembly, homotrimer.

It catalyses the reaction a UDP-3-O-[(3R)-3-hydroxyacyl]-alpha-D-glucosamine + a (3R)-hydroxyacyl-[ACP] = a UDP-2-N,3-O-bis[(3R)-3-hydroxyacyl]-alpha-D-glucosamine + holo-[ACP] + H(+). The protein operates within bacterial outer membrane biogenesis; LPS lipid A biosynthesis. Catalyzes the N-acylation of UDP-3-O-acylglucosamine using 3-hydroxyacyl-ACP as the acyl donor. Is involved in the biosynthesis of lipid A, a phosphorylated glycolipid that anchors the lipopolysaccharide to the outer membrane of the cell. The sequence is that of UDP-3-O-acylglucosamine N-acyltransferase from Paraburkholderia phymatum (strain DSM 17167 / CIP 108236 / LMG 21445 / STM815) (Burkholderia phymatum).